A 520-amino-acid polypeptide reads, in one-letter code: Protein EARLY FLOWERING 5 (520 aa).

3 consecutive short sequence motifs (nuclear localization signal) follow at residues 16–23 (YRKQIRKR), 52–59 (IRKLDMSK), and 71–78 (KKRQLEDT). A disordered region spans residues 83 to 410 (VKKRKEYDEK…PPSSFQDGQA (328 aa)). Composition is skewed to basic and acidic residues over residues 87-97 (KEYDEKKKEQG) and 114-126 (LTGEEDLKPEDSV). A compositionally biased stretch (low complexity) spans 148-168 (SSIGLAISSDGASSSSAALSS). 3 stretches are compositionally biased toward pro residues: residues 198-207 (PLPPLPPLPP), 216-227 (SPFPPPPPGPPP), and 235-253 (PPLPPPPQLPQSSQPPPPG). Composition is skewed to polar residues over residues 267-281 (SDFTFDNRMNANITS), 300-312 (AESNASSFQNANL), and 326-343 (QQHQSTFAGAAASLTNFQ). Pro residues-rich tracts occupy residues 346-369 (VHPPPGMLRFPPPPPPLDMHPPHP) and 378-403 (PRPPYGPPPGPPPMMRPPLPPGPPPS).

In seedlings, mostly expressed in the shoot apical meristem (SAM) and root tip.

The protein localises to the nucleus. Involved in the regulation of flowering time in both long and short days. This is Protein EARLY FLOWERING 5 from Arabidopsis thaliana (Mouse-ear cress).